Here is a 217-residue protein sequence, read N- to C-terminus: Transmembrane protein 253 (217 aa).

The next 4 membrane-spanning stretches (helical) occupy residues 33-53, 62-82, 96-116, and 138-158; these read LVLAVSQLWLAVVVVPLAVSV, MATALPLGPGASGLLTGTVTL, MMIFNTFNLILGFIVVVVEVM, and LSAEAFTLGGVLVSVHALFLL. The segment at 187 to 217 is disordered; that stretch reads PGLENGPTVASTGANERVGQREQTRAALLPP.

It is found in the membrane. This chain is Transmembrane protein 253 (TMEM253), found in Homo sapiens (Human).